The primary structure comprises 457 residues: L-asparaginase-like protein GA18140 (457 aa).

A signal peptide spans 1-20; it reads MRYLCRAQLLSLLLLPLLKA. Cystine bridges form between cysteine 72–cysteine 78, cysteine 172–cysteine 188, and cysteine 327–cysteine 354.

This sequence belongs to the Ntn-hydrolase family.

The polypeptide is L-asparaginase-like protein GA18140 (Drosophila pseudoobscura pseudoobscura (Fruit fly)).